The primary structure comprises 97 residues: Co-chaperonin GroES (97 aa).

This sequence belongs to the GroES chaperonin family. Heptamer of 7 subunits arranged in a ring. Interacts with the chaperonin GroEL.

It localises to the cytoplasm. Its function is as follows. Together with the chaperonin GroEL, plays an essential role in assisting protein folding. The GroEL-GroES system forms a nano-cage that allows encapsulation of the non-native substrate proteins and provides a physical environment optimized to promote and accelerate protein folding. GroES binds to the apical surface of the GroEL ring, thereby capping the opening of the GroEL channel. This is Co-chaperonin GroES from Buchnera aphidicola subsp. Tetraneura caerulescens.